Here is a 320-residue protein sequence, read N- to C-terminus: Cell division protein FtsQ (320 aa).

Residues 1 to 24 form a disordered region; that stretch reads MAQTIKRGGKGVRRATAARSAQRK. The Cytoplasmic portion of the chain corresponds to 1-52; the sequence is MAQTIKRGGKGVRRATAARSAQRKVQTARQQTGSVLDSVLRWLPFSEETLHR. The helical transmembrane segment at 53–73 threads the bilayer; the sequence is ILMTLILAAAAGLVWTVAVMA. Topologically, residues 74–320 are periplasmic; it reads GIPALVSEQA…RAASAKSDEG (247 aa). A POTRA domain is found at 92–160; sequence FKVSHLEVRG…DTLVIDIVER (69 aa). Residues 296–320 form a disordered region; it reads AAEKRAEEQARAEAKRAASAKSDEG.

Belongs to the FtsQ/DivIB family. FtsQ subfamily.

Its subcellular location is the cell inner membrane. Its function is as follows. Essential cell division protein. This chain is Cell division protein FtsQ, found in Novosphingobium aromaticivorans (strain ATCC 700278 / DSM 12444 / CCUG 56034 / CIP 105152 / NBRC 16084 / F199).